A 184-amino-acid chain; its full sequence is Flavodoxin FldP (184 aa).

A Flavodoxin-like domain is found at 4–176; that stretch reads AVVVYFSGYG…TVKLYAARVA (173 aa). FMN-binding positions include 10–14 and 91–147; these read SGYGH and GFTN…SVGA.

Belongs to the FldP flavodoxin family. FMN serves as cofactor.

In terms of biological role, flavodoxins are low-potential electron donors to a number of redox enzymes. FldP protects the cell from oxidative stress and reactive oxygen species (ROS) damage, thereby expanding the capabilities of P.aeruginosa to thrive in hostile environments, and contributes to bacterial survival within the host. In vitro, is able to mediate ferredoxin-NADP(H) reductase (FNR)-driven cytochrome c reduction. This is Flavodoxin FldP from Pseudomonas aeruginosa (strain UCBPP-PA14).